The following is a 613-amino-acid chain: Leucine-rich repeat receptor-like protein FASCIATED EAR2 (613 aa).

Positions 1-28 (MLTATPLPHQLLATFLLVLASATQPAVP) are cleaved as a signal peptide. Residues 29–573 (ASTDRAALLA…WLGGWHGENG (545 aa)) are Extracellular-facing. LRR repeat units follow at residues 79–103 (TPSVAELSLRGLNLTGVIPAAPLAL), 104–128 (LRRLRTLDLSANALSGELPCSLPRS), 130–150 (LALDLSRNALSGAVPTCLPSS), 151–176 (LPALRTLNLSANFLRLPLSPRLSFPA), 178–199 (LAALDLSRNAISGAVPPRIVAD), 202–226 (NSALLLLDLSHNRFSGEIPAGIAAV), 227–250 (RSLQGLFLADNQLSGDIPPGIGNL), 251–274 (TYLQVLDLSNNRLSGSVPAGLAGC), 276–297 (QLLYLQLGGNQLSGALRPELDA), 298–322 (LASLKVLDLSNNKISGEIPLPLAGC), 324–346 (SLEVVDLSGNEISGELSSAVAKW), 347–370 (LSLKFLSLAGNQLSGHLPDWMFSF), 372–394 (LLQWLDLSSNKFVGFIPDGGFNV), 435–459 (VQATTGIDLSGNELCGEIPEGLVDM), 460–483 (KGLEYLNLSCNYLAGQIPAGLGGM), 484–507 (GRLHTLDFSHNGLSGEVPPGIAAM), and 508–531 (TVLEVLNLSYNSLSGPLPTTKFPG). Asparagine 91 is a glycosylation site (N-linked (GlcNAc...) asparagine). Asparagine 158 carries an N-linked (GlcNAc...) asparagine glycan. The N-linked (GlcNAc...) asparagine glycan is linked to asparagine 249. The N-linked (GlcNAc...) asparagine glycan is linked to asparagine 393. Asparagine 466 is a glycosylation site (N-linked (GlcNAc...) asparagine). Asparagine 514 carries an N-linked (GlcNAc...) asparagine glycan. A helical transmembrane segment spans residues 574–597 (WVSLGAFCISTMTSFYVSLATLLC). Topologically, residues 598 to 613 (SSNARNFVFRPVRVEY) are cytoplasmic.

As to expression, expressed in ear primordia, vegetative apex and young leaf tissues. Barely detected in expanded leaf tissues and not expressed in roots.

Its subcellular location is the cell membrane. Receptor-like protein that regulates shoot meristem proliferation. Based on additive and synergistic phenotypes of double mutants, it is probable that unlike CLV1 and CLV2 in A.thaliana, FAE2 and TD1 do not function exclusively in a single pathway. The chain is Leucine-rich repeat receptor-like protein FASCIATED EAR2 (FEA2) from Zea mays (Maize).